Reading from the N-terminus, the 589-residue chain is MSKGHSDHPSAGESWHLYKRIFGFIKPYWRLGVLAIVCMVLAAAGQAAFAWIIQPLVDGTFIEQDPGARLWVPATLVGIFLFHGVTTFASDYTVAWVGRRVVKDVRQAVFEQYLRLPTSYFDKNSPGTLLAKLTYNVNQISAAASKAVVVLVRDTFTVIFLLAYMTYLSGWLVMIVFGLGPLVAVVVTAANKRFRKLSRRMQASVGEYAQIAEDGIRGQAEVKIFGGQRYEAERFDRTNTRHHRQLMRYKAVQAASQPLAQLGAVIALAIILYLATMDVILETISPGGMISFIAAMLLMLPPLKRVIGVNAEIQKALAAGESVFEVLDAPPEPDHGQRPLERARGLIEFDRVAFRYPESEDWVLRDINLSIQPGETVALVGRSGSGKTTLASLLPRFYDPQRGEIRLDGHPLAEYRLQALRSQMSLVNQQVVLFNDSLANNIAYGLSERPTAAQLQAAARAANALEFIEELPEGFDTVIGENGVMLSGGQRQRIAIARALLKDAPILILDEATSALDSESEKRIQEALEKLMRGRTTLVIAHRLSTIEDADRIVVLDAGRVVETGTHRELLDHNGHYASLHRVQFNGPS.

6 consecutive transmembrane segments (helical) span residues valine 33–isoleucine 53, leucine 70–serine 90, valine 148–leucine 168, glycine 170–alanine 190, leucine 262–glutamate 282, and threonine 283–leucine 303. Residues valine 33–lysine 315 form the ABC transmembrane type-1 domain. Positions isoleucine 347–valine 583 constitute an ABC transporter domain. Glycine 381–threonine 388 provides a ligand contact to ATP.

The protein belongs to the ABC transporter superfamily. Lipid exporter (TC 3.A.1.106) family. As to quaternary structure, homodimer.

The protein localises to the cell inner membrane. The catalysed reaction is ATP + H2O + lipid A-core oligosaccharideSide 1 = ADP + phosphate + lipid A-core oligosaccharideSide 2.. Its function is as follows. Involved in lipopolysaccharide (LPS) biosynthesis. Translocates lipid A-core from the inner to the outer leaflet of the inner membrane. Transmembrane domains (TMD) form a pore in the inner membrane and the ATP-binding domain (NBD) is responsible for energy generation. This Alkalilimnicola ehrlichii (strain ATCC BAA-1101 / DSM 17681 / MLHE-1) protein is ATP-dependent lipid A-core flippase.